We begin with the raw amino-acid sequence, 414 residues long: Multifunctional CCA protein (414 aa).

Positions 8 and 11 each coordinate ATP. CTP contacts are provided by Gly8 and Arg11. Glu21 and Asp23 together coordinate Mg(2+). Residues Arg91, Arg137, and Arg140 each contribute to the ATP site. Residues Arg91, Arg137, and Arg140 each coordinate CTP. The HD domain maps to Thr228–Trp329.

This sequence belongs to the tRNA nucleotidyltransferase/poly(A) polymerase family. Bacterial CCA-adding enzyme type 1 subfamily. As to quaternary structure, monomer. Can also form homodimers and oligomers. Mg(2+) is required as a cofactor. The cofactor is Ni(2+).

The enzyme catalyses a tRNA precursor + 2 CTP + ATP = a tRNA with a 3' CCA end + 3 diphosphate. The catalysed reaction is a tRNA with a 3' CCA end + 2 CTP + ATP = a tRNA with a 3' CCACCA end + 3 diphosphate. Functionally, catalyzes the addition and repair of the essential 3'-terminal CCA sequence in tRNAs without using a nucleic acid template. Adds these three nucleotides in the order of C, C, and A to the tRNA nucleotide-73, using CTP and ATP as substrates and producing inorganic pyrophosphate. tRNA 3'-terminal CCA addition is required both for tRNA processing and repair. Also involved in tRNA surveillance by mediating tandem CCA addition to generate a CCACCA at the 3' terminus of unstable tRNAs. While stable tRNAs receive only 3'-terminal CCA, unstable tRNAs are marked with CCACCA and rapidly degraded. In Pectobacterium atrosepticum (strain SCRI 1043 / ATCC BAA-672) (Erwinia carotovora subsp. atroseptica), this protein is Multifunctional CCA protein.